Here is a 144-residue protein sequence, read N- to C-terminus: Large ribosomal subunit protein uL16 (144 aa).

The protein belongs to the universal ribosomal protein uL16 family. In terms of assembly, part of the 50S ribosomal subunit.

Binds 23S rRNA and is also seen to make contacts with the A and possibly P site tRNAs. The chain is Large ribosomal subunit protein uL16 from Novosphingobium aromaticivorans (strain ATCC 700278 / DSM 12444 / CCUG 56034 / CIP 105152 / NBRC 16084 / F199).